The primary structure comprises 158 residues: Small ribosomal subunit protein uS9 (158 aa).

It belongs to the universal ribosomal protein uS9 family.

The polypeptide is Small ribosomal subunit protein uS9 (Brucella melitensis biotype 2 (strain ATCC 23457)).